The sequence spans 85 residues: Beta-toxin BmKAs1 (85 aa).

Positions 1-19 (MKIIIFLIVCSFVLIGVKA) are cleaved as a signal peptide. Positions 20–82 (DNGYLLNKYT…LWAYETNKCN (63 aa)) constitute an LCN-type CS-alpha/beta domain. Disulfide bonds link Cys-31–Cys-81, Cys-35–Cys-56, Cys-42–Cys-63, and Cys-46–Cys-65.

It belongs to the long (4 C-C) scorpion toxin superfamily. Sodium channel inhibitor family. In terms of processing, a possible sulfoxide Met-85 on BmP09 could explain the difference of function between BmK AS-1 and BmP09. Expressed by the venom gland.

The protein localises to the secreted. Beta toxins bind voltage-independently at site-4 of sodium channels (Nav) and shift the voltage of activation toward more negative potentials thereby affecting sodium channel activation and promoting spontaneous and repetitive firing. BmKAs1 also significantly stimulates the binding of [3H]-ryanodine to ryanodine receptors on the sarcoplasmic reticulum of the skeletal muscle. It also displays antinociceptive effect in rat models. Its function is as follows. Toxin BmP09 (which may be post-translationally modified) specifically and reversibly blocks large conductance calcium-dependent and voltage-dependent potassium channels (BK) but has no effect on sodium channels. The chain is Beta-toxin BmKAs1 from Olivierus martensii (Manchurian scorpion).